An 846-amino-acid polypeptide reads, in one-letter code: Disks large-associated protein 5 (846 aa).

Ser67 carries the phosphoserine; by CDK1 modification. Positions 90-120 (RKQMLQKYKEEKQLQKLKEQREKAKRGIFKV) form a coiled coil. Residues 153-284 (TRSKAKDQME…TNATSGMNPD (132 aa)) form a disordered region. 2 stretches are compositionally biased toward basic and acidic residues: residues 156–174 (KAKD…DVRA) and 182–194 (TSEK…EKKV). The residue at position 202 (Ser202) is a Phosphoserine. Residues 203–225 (LRMTRSATQAAKQVPRTVSSTTA) are compositionally biased toward polar residues. Positions 250–266 (KNVETKPDKGISCKVDS) are enriched in basic and acidic residues. Polar residues predominate over residues 269–281 (NTLNSQTNATSGM). Position 326 is a phosphothreonine (Thr326). Thr329 carries the phosphothreonine; by CDK1 modification. Thr338 is modified (phosphothreonine). Residue Lys347 forms a Glycyl lysine isopeptide (Lys-Gly) (interchain with G-Cter in SUMO2) linkage. A phosphothreonine; by CDK1 mark is found at Thr401 and Thr402. The residue at position 618 (Ser618) is a Phosphoserine; by CDK1. Phosphoserine; by AURKA is present on Ser627. Polar residues predominate over residues 628–671 (VSSEGPSQRLGTPKSVNKAVSQSRNEMGIPQQTTSPENAGPQNT). The disordered stretch occupies residues 628–674 (VSSEGPSQRLGTPKSVNKAVSQSRNEMGIPQQTTSPENAGPQNTKSE). Phosphoserine is present on residues Ser629 and Ser634. Thr639 is subject to Phosphothreonine; by CDK1. Position 642 is a phosphoserine; by CDK1 (Ser642). A Phosphoserine modification is found at Ser662. Ser725 and Ser757 each carry phosphoserine; by AURKA. Thr759 is subject to Phosphothreonine; by CDK1. A phosphoserine mark is found at Ser774 and Ser777. Thr784 bears the Phosphothreonine mark. Phosphoserine is present on residues Ser806 and Ser812. Ser830 bears the Phosphoserine; by AURKA mark. Ser839 bears the Phosphoserine; by CDK1 mark.

Belongs to the SAPAP family. As to quaternary structure, interacts with CDK1. Interacts with the C-terminal proline-rich region of FBXO7. Recruited by FBXO7 to a SCF (SKP1-CUL1-F-box) protein complex in a CDK1/Cyclin B-phosphorylation dependent manner. Interacts with CDH1. Ubiquitinated, leading to its degradation. In terms of processing, decreased phosphorylation levels are associated with the differentiation of intestinal epithelial cells. In terms of tissue distribution, abundantly expressed in fetal liver. Expressed at lower levels in bone marrow, testis, colon, and placenta.

Its subcellular location is the nucleus. It is found in the cytoplasm. The protein localises to the cytoskeleton. The protein resides in the spindle. Potential cell cycle regulator that may play a role in carcinogenesis of cancer cells. Mitotic phosphoprotein regulated by the ubiquitin-proteasome pathway. Key regulator of adherens junction integrity and differentiation that may be involved in CDH1-mediated adhesion and signaling in epithelial cells. This Homo sapiens (Human) protein is Disks large-associated protein 5 (DLGAP5).